A 118-amino-acid chain; its full sequence is NADPH-dependent 7-cyano-7-deazaguanine reductase (118 aa).

Cysteine 34 serves as the catalytic Thioimide intermediate. Catalysis depends on aspartate 41, which acts as the Proton donor. Residues 56 to 58 (VEL) and 75 to 76 (HE) each bind substrate.

The protein belongs to the GTP cyclohydrolase I family. QueF type 1 subfamily.

Its subcellular location is the cytoplasm. It catalyses the reaction 7-aminomethyl-7-carbaguanine + 2 NADP(+) = 7-cyano-7-deazaguanine + 2 NADPH + 3 H(+). Its pathway is tRNA modification; tRNA-queuosine biosynthesis. Functionally, catalyzes the NADPH-dependent reduction of 7-cyano-7-deazaguanine (preQ0) to 7-aminomethyl-7-deazaguanine (preQ1). The sequence is that of NADPH-dependent 7-cyano-7-deazaguanine reductase from Halorhodospira halophila (strain DSM 244 / SL1) (Ectothiorhodospira halophila (strain DSM 244 / SL1)).